A 496-amino-acid polypeptide reads, in one-letter code: Cytochrome P450 71B14 (496 aa).

Residues 1-21 traverse the membrane as a helical segment; it reads MIWWFIVGASFFFAFILIAKD. C436 contributes to the heme binding site.

Belongs to the cytochrome P450 family. The cofactor is heme.

It localises to the membrane. The protein is Cytochrome P450 71B14 (CYP71B14) of Arabidopsis thaliana (Mouse-ear cress).